The sequence spans 289 residues: Probable 2-keto-3-deoxyxylonate dehydratase (289 aa).

The Mg(2+) site is built by Glu-144, Glu-146, and Asp-164.

This sequence belongs to the FAH family.

It carries out the reaction 2-dehydro-3-deoxy-D-arabinonate = 2,5-dioxopentanoate + H2O. The protein operates within carbohydrate metabolism; D-xylose degradation. In terms of biological role, probable 2-keto-3-deoxyxylonate dehydratase involved in the degradation of D-xylose, a major component of hemicelluloses such as xylan. Catalyzes the fourth reaction in the xylose utilization pathway through dehydratation of 2-dehydro-3-deoxy-D-xylonate into alpha-ketoglutarate semialdehyde (2,5-dioxopentanoate). This Haloferax volcanii (strain ATCC 29605 / DSM 3757 / JCM 8879 / NBRC 14742 / NCIMB 2012 / VKM B-1768 / DS2) (Halobacterium volcanii) protein is Probable 2-keto-3-deoxyxylonate dehydratase.